Reading from the N-terminus, the 173-residue chain is Ribosome maturation factor RimM (173 aa).

A PRC barrel domain is found at 98 to 170 (EDEYYWCDLL…RMTVSLPEGL (73 aa)).

The protein belongs to the RimM family. In terms of assembly, binds ribosomal protein uS19.

It is found in the cytoplasm. Functionally, an accessory protein needed during the final step in the assembly of 30S ribosomal subunit, possibly for assembly of the head region. Essential for efficient processing of 16S rRNA. May be needed both before and after RbfA during the maturation of 16S rRNA. It has affinity for free ribosomal 30S subunits but not for 70S ribosomes. The protein is Ribosome maturation factor RimM of Geotalea uraniireducens (strain Rf4) (Geobacter uraniireducens).